Here is an 87-residue protein sequence, read N- to C-terminus: uncharacterized protein (87 aa).

The signal sequence occupies residues 1-19 (MLVLLVAVLVTAVYAFVHA). The helical transmembrane segment at 39–59 (LVILGAAVALASILYPVLGVL) threads the bilayer.

It to M.leprae ML2453.

Its subcellular location is the membrane. This is an uncharacterized protein from Mycobacterium bovis (strain ATCC BAA-935 / AF2122/97).